The primary structure comprises 458 residues: F-box/WD repeat-containing protein 9 (458 aa).

Position 1 is an N-acetylmethionine (M1). A disordered region spans residues 1 to 28; sequence MELPPGPRDDPHAWDDDSDPELEPDTDA. Acidic residues predominate over residues 16–28; sequence DDSDPELEPDTDA. Residues S18 and S59 each carry the phosphoserine modification. The region spanning 76 to 123 is the F-box domain; sequence VPGLLSLPPELLLEICAYLDARLVLHVLPRVCHALRDLVRDRVTWRLR. WD repeat units follow at residues 171–210, 224–261, 264–301, 305–342, 344–381, 387–424, and 427–458; these read GHFA…VEPS, THKG…QQFG, KGKA…ALLK, LHSS…VLQR, QLDS…FQLV, GHRS…RTIC, and SHHN…RLQA.

Interacts with SKP1 and CUL1.

Its function is as follows. Substrate-recognition component of the SCF (SKP1-CUL1-F-box protein)-type E3 ubiquitin ligase complex. This is F-box/WD repeat-containing protein 9 (FBXW9) from Bos taurus (Bovine).